Consider the following 481-residue polypeptide: Tripartite motif-containing protein 10 (481 aa).

The RING-type zinc-finger motif lies at 16–61 (CPICQGTLREPVTIDCGHNFCRACLTRYCEIPGPDLEESPTCPLCK). A B box-type zinc finger spans residues 94-135 (GEEDVCQEHGEKIYFFCEDDEMQLCVVCREAGEHATHTMRFL). Residues cysteine 99, histidine 102, cysteine 121, and histidine 127 each coordinate Zn(2+). The stretch at 142–177 (YREQIHKCLKRLRKEREETQEIQSRENKRMQVLLTQ) forms a coiled coil. Residues 292 to 481 (REMKMFLEKL…GRGSSFFLSS (190 aa)) enclose the B30.2/SPRY domain.

Belongs to the TRIM/RBCC family. Interacts with IFNAR1; this interaction prevents association of IFNAR1 with TYK2.

The protein localises to the cytoplasm. Functionally, E3 ligase that plays an essential role in the differentiation and survival of terminal erythroid cells. May directly bind to PTEN and promote its ubiquitination, resulting in its proteasomal degradation and activation of hypertrophic signaling. In addition, plays a role in immune response regulation by repressing the phosphorylation of STAT1 and STAT2 in the interferon/JAK/STAT signaling pathway independent of its E3 ligase activity. Mechanistically, interacts with the intracellular domain of IFNAR1 and thereby inhibits the association of TYK2 and IFNAR1. This chain is Tripartite motif-containing protein 10 (TRIM10), found in Pan troglodytes (Chimpanzee).